The following is a 355-amino-acid chain: Tetraacyldisaccharide 4'-kinase (355 aa).

54–61 (TVGGAGKT) provides a ligand contact to ATP.

This sequence belongs to the LpxK family.

It carries out the reaction a lipid A disaccharide + ATP = a lipid IVA + ADP + H(+). The protein operates within glycolipid biosynthesis; lipid IV(A) biosynthesis; lipid IV(A) from (3R)-3-hydroxytetradecanoyl-[acyl-carrier-protein] and UDP-N-acetyl-alpha-D-glucosamine: step 6/6. Its function is as follows. Transfers the gamma-phosphate of ATP to the 4'-position of a tetraacyldisaccharide 1-phosphate intermediate (termed DS-1-P) to form tetraacyldisaccharide 1,4'-bis-phosphate (lipid IVA). In Rhizobium rhizogenes (strain K84 / ATCC BAA-868) (Agrobacterium radiobacter), this protein is Tetraacyldisaccharide 4'-kinase.